Reading from the N-terminus, the 151-residue chain is Large ribosomal subunit protein bL9 (151 aa).

Belongs to the bacterial ribosomal protein bL9 family.

Its function is as follows. Binds to the 23S rRNA. The chain is Large ribosomal subunit protein bL9 from Bordetella bronchiseptica (strain ATCC BAA-588 / NCTC 13252 / RB50) (Alcaligenes bronchisepticus).